The primary structure comprises 415 residues: Esterase FrsA (415 aa).

The disordered stretch occupies residues 1-23 (MANRNLSESLFKPRQKHQETSTL).

This sequence belongs to the FrsA family.

The enzyme catalyses a carboxylic ester + H2O = an alcohol + a carboxylate + H(+). Catalyzes the hydrolysis of esters. This is Esterase FrsA from Photorhabdus laumondii subsp. laumondii (strain DSM 15139 / CIP 105565 / TT01) (Photorhabdus luminescens subsp. laumondii).